The chain runs to 242 residues: Small ribosomal subunit protein uS2 (242 aa).

It belongs to the universal ribosomal protein uS2 family.

The chain is Small ribosomal subunit protein uS2 from Shewanella piezotolerans (strain WP3 / JCM 13877).